The following is a 282-amino-acid chain: Pantothenate synthetase (282 aa).

ATP is bound at residue methionine 26 to histidine 33. Catalysis depends on histidine 33, which acts as the Proton donor. Residue glutamine 57 coordinates (R)-pantoate. Residue glutamine 57 coordinates beta-alanine. Glycine 148–aspartate 151 contributes to the ATP binding site. Glutamine 154 is a binding site for (R)-pantoate. Leucine 185–arginine 188 is an ATP binding site.

It belongs to the pantothenate synthetase family. In terms of assembly, homodimer.

The protein localises to the cytoplasm. The enzyme catalyses (R)-pantoate + beta-alanine + ATP = (R)-pantothenate + AMP + diphosphate + H(+). Its pathway is cofactor biosynthesis; (R)-pantothenate biosynthesis; (R)-pantothenate from (R)-pantoate and beta-alanine: step 1/1. Functionally, catalyzes the condensation of pantoate with beta-alanine in an ATP-dependent reaction via a pantoyl-adenylate intermediate. The polypeptide is Pantothenate synthetase (Polaromonas sp. (strain JS666 / ATCC BAA-500)).